A 203-amino-acid polypeptide reads, in one-letter code: Dual-action ribosomal maturation protein DarP (203 aa).

Positions 1-13 (MQPMTRNSRNSPG) are enriched in polar residues. Residues 1 to 39 (MQPMTRNSRNSPGSRFPGAFAPEPDMDEPKSKSQKKRDM) are disordered. Over residues 27-39 (DEPKSKSQKKRDM) the composition is skewed to basic and acidic residues.

Belongs to the DarP family.

Its subcellular location is the cytoplasm. Functionally, member of a network of 50S ribosomal subunit biogenesis factors which assembles along the 30S-50S interface, preventing incorrect 23S rRNA structures from forming. Promotes peptidyl transferase center (PTC) maturation. This chain is Dual-action ribosomal maturation protein DarP, found in Cupriavidus pinatubonensis (strain JMP 134 / LMG 1197) (Cupriavidus necator (strain JMP 134)).